Reading from the N-terminus, the 500-residue chain is Squalene epoxidase ERG1 (500 aa).

Residues 20 to 40 form a helical membrane-spanning segment; it reads EADVVVVGAGVFGCTMAFALA. FAD contacts are provided by residues 30–31, 50–51, R58, R145, D332, and M345; these read VF and ER. 2 helical membrane passes run 450-470 and 474-494; these read AFLA…LGIF and LAII…IPIM.

This sequence belongs to the squalene monooxygenase family. The cofactor is FAD.

The protein localises to the microsome membrane. It is found in the endoplasmic reticulum membrane. It localises to the lipid droplet. The catalysed reaction is squalene + reduced [NADPH--hemoprotein reductase] + O2 = (S)-2,3-epoxysqualene + oxidized [NADPH--hemoprotein reductase] + H2O + H(+). Its pathway is terpene metabolism; lanosterol biosynthesis; lanosterol from farnesyl diphosphate: step 2/3. It participates in steroid metabolism; ergosterol biosynthesis. Squalene epoxidase; part of the third module of ergosterol biosynthesis pathway that includes the late steps of the pathway. ERG1 catalyzes the epoxidation of squalene into 2,3-epoxysqualene. The third module or late pathway involves the ergosterol synthesis itself through consecutive reactions that mainly occur in the endoplasmic reticulum (ER) membrane. Firstly, the squalene synthase ERG9 catalyzes the condensation of 2 farnesyl pyrophosphate moieties to form squalene, which is the precursor of all steroids. Squalene synthase is crucial for balancing the incorporation of farnesyl diphosphate (FPP) into sterol and nonsterol isoprene synthesis. Secondly, squalene is converted into lanosterol by the consecutive action of the squalene epoxidase ERG1 and the lanosterol synthase ERG7. Then, the delta(24)-sterol C-methyltransferase ERG6 methylates lanosterol at C-24 to produce eburicol. Eburicol is the substrate of the sterol 14-alpha demethylase encoded by CYP51A, CYP51B and CYP51C, to yield 4,4,24-trimethyl ergosta-8,14,24(28)-trienol. CYP51B encodes the enzyme primarily responsible for sterol 14-alpha-demethylation, and plays an essential role in ascospore formation. CYP51A encodes an additional sterol 14-alpha-demethylase, induced on ergosterol depletion and responsible for the intrinsic variation in azole sensitivity. The third CYP51 isoform, CYP51C, does not encode a sterol 14-alpha-demethylase, but is required for full virulence on host wheat ears. The C-14 reductase ERG24 then reduces the C14=C15 double bond which leads to 4,4-dimethylfecosterol. A sequence of further demethylations at C-4, involving the C-4 demethylation complex containing the C-4 methylsterol oxidases ERG25, the sterol-4-alpha-carboxylate 3-dehydrogenase ERG26 and the 3-keto-steroid reductase ERG27, leads to the production of fecosterol via 4-methylfecosterol. ERG28 has a role as a scaffold to help anchor ERG25, ERG26 and ERG27 to the endoplasmic reticulum. The C-8 sterol isomerase ERG2 then catalyzes the reaction which results in unsaturation at C-7 in the B ring of sterols and thus converts fecosterol to episterol. The sterol-C5-desaturases ERG3A and ERG3BB then catalyze the introduction of a C-5 double bond in the B ring to produce 5-dehydroepisterol. The C-22 sterol desaturases ERG5A and ERG5B further convert 5-dehydroepisterol into ergosta-5,7,22,24(28)-tetraen-3beta-ol by forming the C-22(23) double bond in the sterol side chain. Finally, ergosta-5,7,22,24(28)-tetraen-3beta-ol is substrate of the C-24(28) sterol reductase ERG4 to produce ergosterol. This Gibberella zeae (strain ATCC MYA-4620 / CBS 123657 / FGSC 9075 / NRRL 31084 / PH-1) (Wheat head blight fungus) protein is Squalene epoxidase ERG1.